Consider the following 186-residue polypeptide: Probable GTP-binding protein EngB (186 aa).

Positions 18–186 constitute an EngB-type G domain; sequence DKKEICFIGR…LKKLIGSVIL (169 aa). GTP-binding positions include 26–33, 52–56, 69–72, 135–138, and 166–168; these read GRSNVGKS, GRTQL, DLPG, NKAD, and VSA. Mg(2+) contacts are provided by Ser33 and Thr54.

This sequence belongs to the TRAFAC class TrmE-Era-EngA-EngB-Septin-like GTPase superfamily. EngB GTPase family. Mg(2+) serves as cofactor.

In terms of biological role, necessary for normal cell division and for the maintenance of normal septation. The protein is Probable GTP-binding protein EngB of Malacoplasma penetrans (strain HF-2) (Mycoplasma penetrans).